The sequence spans 1156 residues: Nuclear pore complex protein Nup133 (1156 aa).

M1 bears the N-acetylmethionine mark. The tract at residues M1 to L39 is disordered. 2 positions are modified to phosphoserine: S7 and S15. R17 carries the omega-N-methylarginine modification. S27 is subject to Phosphoserine. At T28 the chain carries Phosphothreonine. Position 30 is an omega-N-methylarginine (R30). A phosphoserine mark is found at S41, S45, S50, S72, S131, S480, S489, S493, S501, and S755. At K787 the chain carries N6-acetyllysine. S1133 carries the phosphoserine modification.

This sequence belongs to the nucleoporin Nup133 family. As to quaternary structure, forms part of the Nup160 subcomplex in the nuclear pore which is composed of NUP160, NUP133, NUP107 and Nup96. This complex plays a role in RNA export and in tethering Nup98 and NUP153 to the nucleus. Widely expressed in fetal and adult tissues. Expressed in the brain and kidney.

It is found in the nucleus. The protein resides in the nuclear pore complex. It localises to the chromosome. The protein localises to the centromere. Its subcellular location is the kinetochore. In terms of biological role, involved in poly(A)+ RNA transport. Involved in nephrogenesis. In Homo sapiens (Human), this protein is Nuclear pore complex protein Nup133 (NUP133).